We begin with the raw amino-acid sequence, 195 residues long: Large ribosomal subunit protein bL27c (195 aa).

A chloroplast-targeting transit peptide spans 1-60 (MASMAFTLVGAFKGMSLSSPCHSSSSASFLRADRVSLSVGGGVGMGVPMTMPVRRLTIQM).

This sequence belongs to the bacterial ribosomal protein bL27 family. In terms of assembly, part of the 50S ribosomal subunit.

Its subcellular location is the plastid. It is found in the chloroplast. The chain is Large ribosomal subunit protein bL27c (RPL27) from Oryza sativa subsp. japonica (Rice).